The sequence spans 476 residues: 23S rRNA (uracil(1939)-C(5))-methyltransferase RlmD (476 aa).

Positions 1 to 55 constitute a TRAM domain; it reads MVDEVLKIESLDLEARGIARRDGKVVFVEGALPGERVYAATVRRKPSYEIARVET. [4Fe-4S] cluster-binding residues include Cys68, Cys74, Cys77, and Cys156. S-adenosyl-L-methionine is bound by residues Gln265, Phe294, Asn299, Glu315, Asn343, and Asp364. The active-site Nucleophile is Cys394.

This sequence belongs to the class I-like SAM-binding methyltransferase superfamily. RNA M5U methyltransferase family. RlmD subfamily.

The catalysed reaction is uridine(1939) in 23S rRNA + S-adenosyl-L-methionine = 5-methyluridine(1939) in 23S rRNA + S-adenosyl-L-homocysteine + H(+). Its function is as follows. Catalyzes the formation of 5-methyl-uridine at position 1939 (m5U1939) in 23S rRNA. The polypeptide is 23S rRNA (uracil(1939)-C(5))-methyltransferase RlmD (Bordetella avium (strain 197N)).